A 189-amino-acid polypeptide reads, in one-letter code: Elongation factor P (189 aa).

Lysine 34 carries the N6-(3,6-diaminohexanoyl)-5-hydroxylysine modification.

This sequence belongs to the elongation factor P family. May be beta-lysylated on the epsilon-amino group of Lys-34 by the combined action of EpmA and EpmB, and then hydroxylated on the C5 position of the same residue by EpmC (if this protein is present). Lysylation is critical for the stimulatory effect of EF-P on peptide-bond formation. The lysylation moiety may extend toward the peptidyltransferase center and stabilize the terminal 3-CCA end of the tRNA. Hydroxylation of the C5 position on Lys-34 may allow additional potential stabilizing hydrogen-bond interactions with the P-tRNA.

Its subcellular location is the cytoplasm. It functions in the pathway protein biosynthesis; polypeptide chain elongation. Involved in peptide bond synthesis. Alleviates ribosome stalling that occurs when 3 or more consecutive Pro residues or the sequence PPG is present in a protein, possibly by augmenting the peptidyl transferase activity of the ribosome. Modification of Lys-34 is required for alleviation. The sequence is that of Elongation factor P from Alkalilimnicola ehrlichii (strain ATCC BAA-1101 / DSM 17681 / MLHE-1).